The chain runs to 202 residues: dITP/XTP pyrophosphatase (202 aa).

8 to 13 lines the substrate pocket; it reads TKNMGK. The Mg(2+) site is built by Glu-41 and Asp-70. Asp-70 serves as the catalytic Proton acceptor. Substrate contacts are provided by residues Ser-71, 155–158, Lys-178, and 183–184; these read FGYD and HR.

This sequence belongs to the HAM1 NTPase family. In terms of assembly, homodimer. It depends on Mg(2+) as a cofactor.

It carries out the reaction XTP + H2O = XMP + diphosphate + H(+). It catalyses the reaction dITP + H2O = dIMP + diphosphate + H(+). The enzyme catalyses ITP + H2O = IMP + diphosphate + H(+). In terms of biological role, pyrophosphatase that catalyzes the hydrolysis of nucleoside triphosphates to their monophosphate derivatives, with a high preference for the non-canonical purine nucleotides XTP (xanthosine triphosphate), dITP (deoxyinosine triphosphate) and ITP. Seems to function as a house-cleaning enzyme that removes non-canonical purine nucleotides from the nucleotide pool, thus preventing their incorporation into DNA/RNA and avoiding chromosomal lesions. The sequence is that of dITP/XTP pyrophosphatase from Bacillus anthracis.